We begin with the raw amino-acid sequence, 436 residues long: Divalent metal cation transporter MntH (436 aa).

Over residues 1–22 the composition is skewed to basic and acidic residues; it reads MDSRSPSLPDDRPDPPEQHLDA. Residues 1 to 31 are disordered; the sequence is MDSRSPSLPDDRPDPPEQHLDARAGATLRGT. A run of 11 helical transmembrane segments spans residues 40 to 60, 71 to 91, 115 to 135, 144 to 164, 177 to 197, 216 to 236, 264 to 284, 304 to 324, 354 to 374, 375 to 395, and 411 to 431; these read ILPF…PGNF, GYSL…IQNL, LVWF…LAEF, LLTG…TFWL, LAVG…VVLA, GSAY…VIYL, VIAA…VAAA, LTPL…LASG, LITM…SSVL, ILSQ…LLLF, and FTVI…YLLW.

The protein belongs to the NRAMP family.

Its subcellular location is the cell membrane. Functionally, h(+)-stimulated, divalent metal cation uptake system. The chain is Divalent metal cation transporter MntH from Deinococcus radiodurans (strain ATCC 13939 / DSM 20539 / JCM 16871 / CCUG 27074 / LMG 4051 / NBRC 15346 / NCIMB 9279 / VKM B-1422 / R1).